The primary structure comprises 365 residues: Probable 7-methylxanthine methyltransferase PCS2 (365 aa).

S-adenosyl-L-homocysteine is bound at residue Tyr19. Thr26 is a theobromine binding site. S-adenosyl-L-homocysteine contacts are provided by Cys62, Asp99, Leu100, Ser134, and Phe135. Residues Tyr152, His155, and Trp156 each contribute to the theobromine site. Asn173 contributes to the Mg(2+) binding site. Residue Arg221 coordinates theobromine. Residues Asp259, Phe261, and Asn262 each contribute to the Mg(2+) site.

Belongs to the methyltransferase superfamily. Type-7 methyltransferase family. The cofactor is Mg(2+).

It catalyses the reaction 7-methylxanthine + S-adenosyl-L-methionine = theobromine + S-adenosyl-L-homocysteine + H(+). Its function is as follows. No detectable N-methyltransferase activity. This Camellia ptilophylla (Cocoa tea) protein is Probable 7-methylxanthine methyltransferase PCS2.